The primary structure comprises 177 residues: Large ribosomal subunit protein uL6 (177 aa).

This sequence belongs to the universal ribosomal protein uL6 family. Part of the 50S ribosomal subunit.

This protein binds to the 23S rRNA, and is important in its secondary structure. It is located near the subunit interface in the base of the L7/L12 stalk, and near the tRNA binding site of the peptidyltransferase center. The sequence is that of Large ribosomal subunit protein uL6 from Thioalkalivibrio sulfidiphilus (strain HL-EbGR7).